A 364-amino-acid polypeptide reads, in one-letter code: Natterin-3 (364 aa).

The signal sequence occupies residues 1-18 (MKLSVLVVTLLAVSWTSA). The propeptide occupies 19 to 42 (QPETFSIQTKEANMNPEPANIRVA).

The protein belongs to the natterin family. Post-translationally, contains 4 disulfide bonds. Expressed by the venom gland.

It is found in the secreted. Inhibited by tissue-kallikrein inhibitor TKI and trasylol. Plasma kallikrein inhibitor PKSI527 and classical inhibitors of serine-, metallo-, thiol- or aspartate-peptidases evokes a minor inhibition of the peptide digestion. Shows nociceptive, edema-inducing and kininogenase activity with release of kallidin from low molecular weight kininogen. The cleavage occurs at Met-Lys bonds. This chain is Natterin-3, found in Thalassophryne nattereri (Copper Joe toadfish).